Reading from the N-terminus, the 85-residue chain is Large ribosomal subunit protein bL27 (85 aa).

Residues 1–11 (MASKASGGSTR) show a composition bias toward polar residues. The segment at 1–20 (MASKASGGSTRNGRDSISKR) is disordered.

This sequence belongs to the bacterial ribosomal protein bL27 family.

This chain is Large ribosomal subunit protein bL27, found in Sulfurihydrogenibium sp. (strain YO3AOP1).